Here is a 750-residue protein sequence, read N- to C-terminus: uncharacterized protein (750 aa).

N61, N84, N115, N154, N176, N197, N207, N228, N241, N267, N293, N299, N312, N335, N351, N373, N389, and N519 each carry an N-linked (GlcNAc...) asparagine glycan. Residues S675 and S678 each carry the phosphoserine modification. K697 participates in a covalent cross-link: Glycyl lysine isopeptide (Lys-Gly) (interchain with G-Cter in ubiquitin). Polar residues-rich tracts occupy residues 703-726 and 736-750; these read EITA…SNRT and KDSN…HLVA. A disordered region spans residues 703–750; that stretch reads EITAIDNSSSANNTDVTGSTSNRTELSHPDVTPKDSNGPVNNNAHLVA. N-linked (GlcNAc...) asparagine glycans are attached at residues N709, N714, and N724.

Post-translationally, N-glycosylated.

Its subcellular location is the mitochondrion. This is an uncharacterized protein from Saccharomyces cerevisiae (strain ATCC 204508 / S288c) (Baker's yeast).